The chain runs to 460 residues: Ribulose bisphosphate carboxylase (460 aa).

N112 serves as a coordination point for substrate. Residue K167 is the Proton acceptor of the active site. K169 lines the substrate pocket. Mg(2+) contacts are provided by K192, D194, and E195. K192 is subject to N6-carboxylysine. H288 acts as the Proton acceptor in catalysis. The substrate site is built by R289, H322, and S369.

It belongs to the RuBisCO large chain family. Type II subfamily. In terms of assembly, homodimer. Requires Mg(2+) as cofactor.

It catalyses the reaction 2 (2R)-3-phosphoglycerate + 2 H(+) = D-ribulose 1,5-bisphosphate + CO2 + H2O. It carries out the reaction D-ribulose 1,5-bisphosphate + O2 = 2-phosphoglycolate + (2R)-3-phosphoglycerate + 2 H(+). RuBisCO catalyzes two reactions: the carboxylation of D-ribulose 1,5-bisphosphate, the primary event in carbon dioxide fixation, as well as the oxidative fragmentation of the pentose substrate. Both reactions occur simultaneously and in competition at the same active site. This is Ribulose bisphosphate carboxylase from Rhodopseudomonas palustris (strain BisA53).